The sequence spans 328 residues: Malate dehydrogenase (328 aa).

NAD(+) is bound at residue 11 to 17 (GAAGQIG). The substrate site is built by Arg94 and Arg100. Residues Asn107, Gln114, and 131-133 (VGN) contribute to the NAD(+) site. The substrate site is built by Asn133 and Arg164. His189 (proton acceptor) is an active-site residue.

The protein belongs to the LDH/MDH superfamily. MDH type 2 family.

The catalysed reaction is (S)-malate + NAD(+) = oxaloacetate + NADH + H(+). In terms of biological role, catalyzes the reversible oxidation of malate to oxaloacetate. The polypeptide is Malate dehydrogenase (Xanthomonas euvesicatoria pv. vesicatoria (strain 85-10) (Xanthomonas campestris pv. vesicatoria)).